We begin with the raw amino-acid sequence, 366 residues long: Phosphoserine aminotransferase (366 aa).

R42 contributes to the L-glutamate binding site. Pyridoxal 5'-phosphate contacts are provided by residues 76–77, W101, T156, D178, and Q201; that span reads AT. At K202 the chain carries N6-(pyridoxal phosphate)lysine. Position 243–244 (243–244) interacts with pyridoxal 5'-phosphate; sequence NT.

This sequence belongs to the class-V pyridoxal-phosphate-dependent aminotransferase family. SerC subfamily. In terms of assembly, homodimer. Requires pyridoxal 5'-phosphate as cofactor.

It is found in the cytoplasm. The catalysed reaction is O-phospho-L-serine + 2-oxoglutarate = 3-phosphooxypyruvate + L-glutamate. It catalyses the reaction 4-(phosphooxy)-L-threonine + 2-oxoglutarate = (R)-3-hydroxy-2-oxo-4-phosphooxybutanoate + L-glutamate. The protein operates within amino-acid biosynthesis; L-serine biosynthesis; L-serine from 3-phospho-D-glycerate: step 2/3. Its pathway is cofactor biosynthesis; pyridoxine 5'-phosphate biosynthesis; pyridoxine 5'-phosphate from D-erythrose 4-phosphate: step 3/5. In terms of biological role, catalyzes the reversible conversion of 3-phosphohydroxypyruvate to phosphoserine and of 3-hydroxy-2-oxo-4-phosphonooxybutanoate to phosphohydroxythreonine. This is Phosphoserine aminotransferase from Aromatoleum aromaticum (strain DSM 19018 / LMG 30748 / EbN1) (Azoarcus sp. (strain EbN1)).